Here is a 114-residue protein sequence, read N- to C-terminus: MANDRLRALEDVEKEIALVLQSAGTIVLELSKEKANASLLDRQLNQFQTSINRVESELSSQIRYLTQVATGQPHEGSTYSARKDCQMALNRAEYARVKLGELGRTCEMMLDPQT.

Residues 28 to 61 adopt a coiled-coil conformation; the sequence is LELSKEKANASLLDRQLNQFQTSINRVESELSSQ.

The protein belongs to the Mediator complex subunit 11 family. In terms of assembly, component of the Mediator complex. As to expression, ubiquitously expressed at early stage of development. After fertilization expressed in head region as well as in lateral line primordium.

Its subcellular location is the nucleus. Component of the Mediator complex, a coactivator involved in the regulated transcription of nearly all RNA polymerase II-dependent genes. Mediator functions as a bridge to convey information from gene-specific regulatory proteins to the basal RNA polymerase II transcription machinery. Mediator is recruited to promoters by direct interactions with regulatory proteins and serves as a scaffold for the assembly of a functional pre-initiation complex with RNA polymerase II and the general transcription factors. This is Mediator of RNA polymerase II transcription subunit 11 (med11) from Danio rerio (Zebrafish).